A 456-amino-acid polypeptide reads, in one-letter code: MSLDIQCEQLSDARWTELLPLIQQYEVVRLDDCGLTEVRCKDISSAVQANPALTELSLRTNELGDGGVGLVLQGLQNPTCKIQKLSLQNCGLTEAGCGILPGMLRSLSTLRELHLNDNPMGDAGLKLLCEGLQDPQCRLEKLQLEYCNLTATSCEPLASVLRVKADFKELVLSNNDLHEPGVRILCQGLKDSACQLESLKLENCGITAANCKDLCDVVASKASLQELDLSSNKLGNAGIAALCPGLLLPSCKLRTLWLWECDITAEGCKDLCRVLRAKQSLKELSLASNELKDEGARLLCESLLEPGCQLESLWIKTCSLTAASCPYFCSVLTKSRSLLELQMSSNPLGDEGVQELCKALSQPDTVLRELWLGDCDVTNSGCSSLANVLLANRSLRELDLSNNCMGGPGVLQLLESLKQPSCTLQQLVLYDIYWTNEVEEQLRALEEERPSLRIIS.

Met-1 carries the N-acetylmethionine modification. LRR repeat units follow at residues 15–43, 44–71, 72–100, 101–128, 129–157, 158–185, 186–214, 215–242, 243–271, 272–299, 300–328, 329–356, 357–385, 386–413, and 414–442; these read WTELLPLIQQYEVVRLDDCGLTEVRCKDI, SSAVQANPALTELSLRTNELGDGGVGLV, LQGLQNPTCKIQKLSLQNCGLTEAGCGIL, PGMLRSLSTLRELHLNDNPMGDAGLKLL, CEGLQDPQCRLEKLQLEYCNLTATSCEPL, ASVLRVKADFKELVLSNNDLHEPGVRIL, CQGLKDSACQLESLKLENCGITAANCKDL, CDVVASKASLQELDLSSNKLGNAGIAAL, CPGLLLPSCKLRTLWLWECDITAEGCKDL, CRVLRAKQSLKELSLASNELKDEGARLL, CESLLEPGCQLESLWIKTCSLTAASCPYF, CSVLTKSRSLLELQMSSNPLGDEGVQEL, CKALSQPDTVLRELWLGDCDVTNSGCSSL, ANVLLANRSLRELDLSNNCMGGPGVLQL, and LESLKQPSCTLQQLVLYDIYWTNEVEEQL. Ser-86 is modified (phosphoserine).

As to quaternary structure, forms high-affinity heterodimers with RNASE1, ANG and RNASE2.

The protein localises to the cytoplasm. The protein resides in the nucleus. In terms of biological role, ribonuclease inhibitor which inhibits RNASE1, RNASE2 and angiogenin (ANG). May play a role in redox homeostasis. Required to inhibit the cytotoxic tRNA ribonuclease activity of ANG in the cytoplasm in absence of stress. Relocates to the nucleus in response to stress, relieving inhibition of ANG in the cytoplasm, and inhibiting the angiogenic activity of ANG in the nucleus. The polypeptide is Ribonuclease inhibitor (Rnh1) (Mus musculus (Mouse)).